Consider the following 2327-residue polypeptide: Acetyl-CoA carboxylase 2 (2327 aa).

A disordered region spans residues 1–62 (MTSTHVATLG…NGGVSDSKKL (62 aa)). The 508-residue stretch at 134–641 (PIHSVLVANN…HTGWLDTRIA (508 aa)) folds into the Biotin carboxylation domain. An ATP-grasp domain is found at 287 to 481 (ECCLDSIPDE…AAQVAVGMGI (195 aa)). 313–370 (CQVVGYPAMIKASWGGGGKGIRKVHNDDEVRTLFKQVQGEVPGSPIFIMRLAAQSRHL) provides a ligand contact to ATP. Mg(2+)-binding residues include glutamate 436, glutamate 450, and asparagine 452. The Mn(2+) site is built by glutamate 436, glutamate 450, and asparagine 452. The active site involves arginine 454. Residues 768–842 (LQNDHDPSKL…QAGDLIARLD (75 aa)) form the Biotinyl-binding domain. At lysine 809 the chain carries N6-biotinyllysine. Residues 1568-1909 (PYQPLSVIDL…YIGGPLPVTT (342 aa)) form the CoA carboxyltransferase N-terminal domain. Positions 1568–2227 (PYQPLSVIDL…EDVLAKEIRA (660 aa)) are carboxyltransferase. Positions 1818, 2119, and 2121 each coordinate CoA. Positions 1913–2227 (PPDRPVAYIP…EDVLAKEIRA (315 aa)) constitute a CoA carboxyltransferase C-terminal domain.

As to quaternary structure, homodimer. It depends on biotin as a cofactor. Mg(2+) serves as cofactor. Requires Mn(2+) as cofactor.

It is found in the cytoplasm. It localises to the cytosol. The catalysed reaction is hydrogencarbonate + acetyl-CoA + ATP = malonyl-CoA + ADP + phosphate + H(+). It catalyses the reaction N(6)-biotinyl-L-lysyl-[protein] + hydrogencarbonate + ATP = N(6)-carboxybiotinyl-L-lysyl-[protein] + ADP + phosphate + H(+). It functions in the pathway lipid metabolism; malonyl-CoA biosynthesis; malonyl-CoA from acetyl-CoA: step 1/1. Multifunctional enzyme that catalyzes the carboxylation of acetyl-CoA, forming malonyl-CoA, which is used in the plastid for fatty acid synthesis and in the cytosol in various biosynthetic pathways including fatty acid elongation. The chain is Acetyl-CoA carboxylase 2 (ACC2) from Oryza sativa subsp. japonica (Rice).